We begin with the raw amino-acid sequence, 1264 residues long: Ubiquitin carboxyl-terminal hydrolase usp-48 (1264 aa).

One can recognise a USP domain in the interval 108–430 (AGLINGGNFC…ACYGLLYRRR (323 aa)). The Nucleophile role is filled by Cys-117. Residue His-366 is the Proton acceptor of the active site. Disordered regions lie at residues 390–415 (IPKP…KEKY), 522–610 (AKGE…IMDT), and 630–679 (TVEV…PVSS). Composition is skewed to basic and acidic residues over residues 403-415 (KTEK…KEKY) and 532-543 (EASENEEKKKNE). Residues 516 to 547 (AQEYEVAKGEKKKKKKEASENEEKKKNEEDEA) are a coiled coil. Residues 565 to 575 (SEPSTSAAATE) show a composition bias toward low complexity. Polar residues-rich tracts occupy residues 587–599 (ETPN…STQV) and 663–678 (NGTN…QPVS).

It belongs to the peptidase C19 family. In terms of tissue distribution, broadly expressed. Expressed in germline.

Its subcellular location is the nucleus. It localises to the chromosome. The enzyme catalyses Thiol-dependent hydrolysis of ester, thioester, amide, peptide and isopeptide bonds formed by the C-terminal Gly of ubiquitin (a 76-residue protein attached to proteins as an intracellular targeting signal).. Its function is as follows. Recognizes and hydrolyzes the peptide bond at the C-terminal Gly of ubiquitin. Involved in the processing of poly-ubiquitin precursors as well as that of ubiquitinated proteins. Required post-developmentally to restrict the plasticity of epidermal cells, probably by regulating gene expression. The chain is Ubiquitin carboxyl-terminal hydrolase usp-48 from Caenorhabditis elegans.